A 172-amino-acid polypeptide reads, in one-letter code: MEALLGYLLIFVARLTDVSMATIRMIMVVKGKRVIAACIGFVEVSIYVVAIGKVLSGMDNPLNVLAYASGFATGNYVGIFLEEKMALGNIIAQVISDYEVEKLVEKLRNVGFGVTVIEGYGREGIRYILNVSLQRKHLSRLYQTVEEHDKKAFVTVTDARAIRGGYFAGMKK.

The next 3 membrane-spanning stretches (helical) occupy residues 3–23, 34–54, and 61–81; these read ALLGYLLIFVARLTDVSMATI, VIAACIGFVEVSIYVVAIGKV, and PLNVLAYASGFATGNYVGIFL.

This sequence belongs to the UPF0316 family.

It is found in the cell membrane. This chain is UPF0316 protein Clos_0555, found in Alkaliphilus oremlandii (strain OhILAs) (Clostridium oremlandii (strain OhILAs)).